A 546-amino-acid polypeptide reads, in one-letter code: Protein FAM124A (546 aa).

3 disordered regions span residues 1-37 (MDPK…SELS), 286-360 (FPKP…FQRS), and 488-546 (SSSS…EFYI). Positions 24 to 36 (SDYSHLSSTSSEL) are enriched in low complexity. A compositionally biased stretch (basic residues) spans 286-302 (FPKPGRVHHASEKKRHS). Composition is skewed to polar residues over residues 304–324 (PLPS…SPLN) and 347–360 (ANST…FQRS). The span at 488 to 511 (SSSSATARAAPPAPSTSTLTDSSP) shows a compositional bias: low complexity.

It belongs to the FAM124 family.

The protein is Protein FAM124A (FAM124A) of Homo sapiens (Human).